A 313-amino-acid chain; its full sequence is Ribosomal RNA small subunit methyltransferase H (313 aa).

S-adenosyl-L-methionine is bound by residues 51–53 (GGH), Asp-71, Phe-98, Asp-119, and Gln-126. Residues 293–313 (EEQRANPRSRSARLRVAERVS) form a disordered region.

This sequence belongs to the methyltransferase superfamily. RsmH family.

The protein resides in the cytoplasm. The catalysed reaction is cytidine(1402) in 16S rRNA + S-adenosyl-L-methionine = N(4)-methylcytidine(1402) in 16S rRNA + S-adenosyl-L-homocysteine + H(+). Its function is as follows. Specifically methylates the N4 position of cytidine in position 1402 (C1402) of 16S rRNA. The sequence is that of Ribosomal RNA small subunit methyltransferase H from Roseiflexus sp. (strain RS-1).